The sequence spans 429 residues: D-amino acid dehydrogenase 1 (429 aa).

Residue 3-17 participates in FAD binding; sequence VLVLGSGVIGVTSAY.

This sequence belongs to the DadA oxidoreductase family. The cofactor is FAD.

It carries out the reaction a D-alpha-amino acid + A + H2O = a 2-oxocarboxylate + AH2 + NH4(+). Oxidative deamination of D-amino acids. This chain is D-amino acid dehydrogenase 1 (dadA1), found in Ralstonia nicotianae (strain ATCC BAA-1114 / GMI1000) (Ralstonia solanacearum).